The primary structure comprises 67 residues: Probable Sec-independent protein translocase protein TatE (67 aa).

A helical membrane pass occupies residues 4–21 (ISITKLLVVAALVVLLFG).

This sequence belongs to the TatA/E family. TatE subfamily.

Its subcellular location is the cell inner membrane. Its function is as follows. Part of the twin-arginine translocation (Tat) system that transports large folded proteins containing a characteristic twin-arginine motif in their signal peptide across membranes. TatE shares overlapping functions with TatA. This chain is Probable Sec-independent protein translocase protein TatE, found in Enterobacter cloacae subsp. cloacae (strain ATCC 13047 / DSM 30054 / NBRC 13535 / NCTC 10005 / WDCM 00083 / NCDC 279-56).